Consider the following 277-residue polypeptide: MRRLVRKTVSLPPSGAPLVEVADLNYSVSGRELLRNITFRLTDGELLAVLGRNGAGKSTLLRHLTGELGKEGVRMFGQPLREYAAADLARRRAALPQQTPLTFAYEVLDVVLLGRIPHGRRETPEDREIARAALARVGLAGFEHRNILTLSGGEQQRVHLARVLAQLWADPAAPEQPARVLLLDEPTSSLDLAHQHATLRLARELCTQGVGVIAVLHDLNLAAQYADRVLIVAGGRVTALGTPEAVLTPAIIEEAFGHRVAVTPHPCLNCPLIVSAQ.

The 241-residue stretch at 19 to 259 (VEVADLNYSV…AIIEEAFGHR (241 aa)) folds into the ABC transporter domain. ATP is bound at residue 51–58 (GRNGAGKS).

The protein belongs to the ABC transporter superfamily. Heme (hemin) importer (TC 3.A.1.14.5) family. As to quaternary structure, the complex is composed of two ATP-binding proteins (HmuV), two transmembrane proteins (HmuU) and a solute-binding protein (HmuT).

It localises to the cell membrane. Functionally, part of the ABC transporter complex HmuTUV involved in hemin import. Responsible for energy coupling to the transport system. This is Hemin import ATP-binding protein HmuV from Deinococcus geothermalis (strain DSM 11300 / CIP 105573 / AG-3a).